Here is a 499-residue protein sequence, read N- to C-terminus: Fumarate hydratase 2 (499 aa).

Positions alanine 19 to valine 51 are disordered. Residues leucine 23–threonine 45 show a composition bias toward basic and acidic residues. Substrate is bound by residues serine 134–threonine 136, histidine 164–aspartate 167, serine 174–asparagine 176, and threonine 222. The active-site Proton donor/acceptor is histidine 223. The active site involves serine 353. Substrate-binding positions include serine 354 and lysine 359–asparagine 361.

This sequence belongs to the class-II fumarase/aspartase family. Fumarase subfamily. In terms of assembly, homotetramer.

It is found in the cytoplasm. The protein resides in the cytosol. The catalysed reaction is (S)-malate = fumarate + H2O. Fumarate hydratase activity (fumarate to L-malate) is strongly inhibited by phosphoenolpyruvate, citrate, oxaloacetate, ATP and ADP. Malate dehydratase activity (malate to fumarate) is activated by oxaloacetate, Asn and Gln. Malate dehydratase activity (malate to fumarate) is inhibited by citrate, succinate, ADP and ATP. Functionally, cytosolic fumarate hydratase that catalyzes the reversible stereospecific interconversion of fumarate to L-malate. Catalyzes the dehydration of L-malate to fumarate in the cytosol: required for the massive fumarate accumulation during the day in plants grown under high nitrogen. Also required for acclimation of photosynthesis to cold: acts by mediating accumulation of fumarate at low temperature, leading to reduce accumulation of phosphorylated sugars. The polypeptide is Fumarate hydratase 2 (Arabidopsis thaliana (Mouse-ear cress)).